We begin with the raw amino-acid sequence, 153 residues long: UPF0158 protein PA5073 (153 aa).

It belongs to the UPF0158 family.

In Pseudomonas aeruginosa (strain ATCC 15692 / DSM 22644 / CIP 104116 / JCM 14847 / LMG 12228 / 1C / PRS 101 / PAO1), this protein is UPF0158 protein PA5073.